A 164-amino-acid chain; its full sequence is NADH-quinone oxidoreductase subunit I (164 aa).

4Fe-4S ferredoxin-type domains follow at residues 55–85 and 95–124; these read LRRYPNGEERCIACKLCEAICPAQAITIDAE and TRYDIDMTKCIYCGFCQEACPVDAIVEGPN. Residues C65, C68, C71, C75, C104, C107, C110, and C114 each coordinate [4Fe-4S] cluster.

The protein belongs to the complex I 23 kDa subunit family. As to quaternary structure, NDH-1 is composed of 14 different subunits. Subunits NuoA, H, J, K, L, M, N constitute the membrane sector of the complex. Requires [4Fe-4S] cluster as cofactor.

The protein resides in the cell inner membrane. It carries out the reaction a quinone + NADH + 5 H(+)(in) = a quinol + NAD(+) + 4 H(+)(out). Its function is as follows. NDH-1 shuttles electrons from NADH, via FMN and iron-sulfur (Fe-S) centers, to quinones in the respiratory chain. The immediate electron acceptor for the enzyme in this species is believed to be ubiquinone. Couples the redox reaction to proton translocation (for every two electrons transferred, four hydrogen ions are translocated across the cytoplasmic membrane), and thus conserves the redox energy in a proton gradient. This chain is NADH-quinone oxidoreductase subunit I, found in Dinoroseobacter shibae (strain DSM 16493 / NCIMB 14021 / DFL 12).